We begin with the raw amino-acid sequence, 117 residues long: CUE domain-containing protein CUE4 (117 aa).

The segment at glutamine 27 to valine 74 is disordered. A Glycyl lysine isopeptide (Lys-Gly) (interchain with G-Cter in ubiquitin) cross-link involves residue lysine 37. Serine 48 carries the phosphoserine modification. Over residues proline 56–valine 74 the composition is skewed to basic and acidic residues. One can recognise a CUE domain in the interval valine 74–leucine 116.

Ubiquitinated.

The protein localises to the cytoplasm. The protein resides in the endoplasmic reticulum. This chain is CUE domain-containing protein CUE4 (CUE4), found in Saccharomyces cerevisiae (strain ATCC 204508 / S288c) (Baker's yeast).